We begin with the raw amino-acid sequence, 229 residues long: 7-cyano-7-deazaguanine synthase (229 aa).

15-25 (LSGGLDSTTCL) provides a ligand contact to ATP. The Zn(2+) site is built by Cys192, Cys202, Cys205, and Cys208.

The protein belongs to the QueC family. Zn(2+) serves as cofactor.

The catalysed reaction is 7-carboxy-7-deazaguanine + NH4(+) + ATP = 7-cyano-7-deazaguanine + ADP + phosphate + H2O + H(+). The protein operates within purine metabolism; 7-cyano-7-deazaguanine biosynthesis. Functionally, catalyzes the ATP-dependent conversion of 7-carboxy-7-deazaguanine (CDG) to 7-cyano-7-deazaguanine (preQ(0)). The chain is 7-cyano-7-deazaguanine synthase from Acinetobacter baylyi (strain ATCC 33305 / BD413 / ADP1).